Here is a 159-residue protein sequence, read N- to C-terminus: uncharacterized protein (159 aa).

This is an uncharacterized protein from Caenorhabditis elegans.